The chain runs to 145 residues: D-aminoacyl-tRNA deacylase (145 aa).

A Gly-cisPro motif, important for rejection of L-amino acids motif is present at residues 137-138 (GP).

It belongs to the DTD family. Homodimer.

It is found in the cytoplasm. It carries out the reaction glycyl-tRNA(Ala) + H2O = tRNA(Ala) + glycine + H(+). The enzyme catalyses a D-aminoacyl-tRNA + H2O = a tRNA + a D-alpha-amino acid + H(+). Functionally, an aminoacyl-tRNA editing enzyme that deacylates mischarged D-aminoacyl-tRNAs. Also deacylates mischarged glycyl-tRNA(Ala), protecting cells against glycine mischarging by AlaRS. Acts via tRNA-based rather than protein-based catalysis; rejects L-amino acids rather than detecting D-amino acids in the active site. By recycling D-aminoacyl-tRNA to D-amino acids and free tRNA molecules, this enzyme counteracts the toxicity associated with the formation of D-aminoacyl-tRNA entities in vivo and helps enforce protein L-homochirality. The chain is D-aminoacyl-tRNA deacylase from Salmonella agona (strain SL483).